We begin with the raw amino-acid sequence, 293 residues long: Pyridoxal 5'-phosphate synthase subunit PdxS (293 aa).

Asp23 contributes to the D-ribose 5-phosphate binding site. Lys80 functions as the Schiff-base intermediate with D-ribose 5-phosphate in the catalytic mechanism. Gly152 serves as a coordination point for D-ribose 5-phosphate. Arg164 contacts D-glyceraldehyde 3-phosphate. D-ribose 5-phosphate contacts are provided by residues Gly213 and 234–235; that span reads GS.

Belongs to the PdxS/SNZ family. In the presence of PdxT, forms a dodecamer of heterodimers.

It carries out the reaction aldehydo-D-ribose 5-phosphate + D-glyceraldehyde 3-phosphate + L-glutamine = pyridoxal 5'-phosphate + L-glutamate + phosphate + 3 H2O + H(+). Its pathway is cofactor biosynthesis; pyridoxal 5'-phosphate biosynthesis. Its function is as follows. Catalyzes the formation of pyridoxal 5'-phosphate from ribose 5-phosphate (RBP), glyceraldehyde 3-phosphate (G3P) and ammonia. The ammonia is provided by the PdxT subunit. Can also use ribulose 5-phosphate and dihydroxyacetone phosphate as substrates, resulting from enzyme-catalyzed isomerization of RBP and G3P, respectively. The chain is Pyridoxal 5'-phosphate synthase subunit PdxS from Herpetosiphon aurantiacus (strain ATCC 23779 / DSM 785 / 114-95).